The following is a 263-amino-acid chain: Hydroxyethylthiazole kinase (263 aa).

Met39 is a substrate binding site. ATP is bound by residues Lys115 and Thr160. Residue Gly187 coordinates substrate.

Belongs to the Thz kinase family. Mg(2+) serves as cofactor.

It catalyses the reaction 5-(2-hydroxyethyl)-4-methylthiazole + ATP = 4-methyl-5-(2-phosphooxyethyl)-thiazole + ADP + H(+). It functions in the pathway cofactor biosynthesis; thiamine diphosphate biosynthesis; 4-methyl-5-(2-phosphoethyl)-thiazole from 5-(2-hydroxyethyl)-4-methylthiazole: step 1/1. Catalyzes the phosphorylation of the hydroxyl group of 4-methyl-5-beta-hydroxyethylthiazole (THZ). The chain is Hydroxyethylthiazole kinase from Staphylococcus aureus (strain bovine RF122 / ET3-1).